The sequence spans 277 residues: Zaragozic acid A biosynthesis cluster protein 1 (277 aa).

The protein operates within secondary metabolite biosynthesis. Its function is as follows. Part of the gene cluster that mediates the biosynthesis of squalestatin S1 (SQS1, also known as zaragozic acid A), a heavily oxidized fungal polyketide that offers potent cholesterol lowering activity by targeting squalene synthase (SS). SQS1 is composed of a 2,8-dioxobicyclic[3.2.1]octane-3,4,5-tricarboxyclic acid core that is connected to two lipophilic polyketide arms. These initial steps feature the priming of an unusual benzoic acid starter unit onto the highly reducing polyketide synthase clz14, followed by oxaloacetate extension and product release to generate a tricarboxylic acid containing product. The phenylalanine ammonia lyase (PAL) clz10 and the acyl-CoA ligase clz12 are involved in transforming phenylalanine into benzoyl-CoA. The citrate synthase-like protein clz17 is involved in connecting the C-alpha-carbons of the hexaketide chain and oxaloacetate to afford the tricarboxylic acid unit. The potential hydrolytic enzymes, clz11 and clz13, are in close proximity to pks2 and may participate in product release. On the other side, the tetraketide arm is synthesized by a the squalestatin tetraketide synthase clz2 and enzymatically esterified to the core in the last biosynthetic step, by the acetyltransferase clz6. The biosynthesis of the tetraketide must involve 3 rounds of chain extension. After the first and second rounds methyl-transfer occurs, and in all rounds of extension the ketoreductase and dehydratase are active. The enoyl reductase and C-MeT of clz2 are not active in the final round of extension. The acetyltransferase clz6 appears to have a broad substrate selectivity for its acyl CoA substrate, allowing the in vitro synthesis of novel squalestatins. The biosynthesis of SQS1 requires several oxidative steps likely performed by oxidoreductases clz3, clz15 and clz16. Finally, in support of the identification of the cluster as being responsible for SQS1 production, the cluster contains a gene encoding a putative squalene synthase (SS) clz20, suggesting a likely mechanism for self-resistance. The polypeptide is Zaragozic acid A biosynthesis cluster protein 1 (Cochliobolus lunatus (Filamentous fungus)).